We begin with the raw amino-acid sequence, 153 residues long: Large ribosomal subunit protein uL15 (153 aa).

Residues 21–42 are disordered; the sequence is RGIGSGKGKTGGRGIKGQKSRS. Residues 23–35 are compositionally biased toward gly residues; sequence IGSGKGKTGGRGI.

This sequence belongs to the universal ribosomal protein uL15 family. Part of the 50S ribosomal subunit.

In terms of biological role, binds to the 23S rRNA. The protein is Large ribosomal subunit protein uL15 of Rickettsia peacockii (strain Rustic).